The following is a 434-amino-acid chain: Serine--tRNA ligase (434 aa).

241–243 contacts L-serine; sequence TAE. Residue 272–274 coordinates ATP; sequence RSE. Glutamate 295 lines the L-serine pocket. Position 359 to 362 (359 to 362) interacts with ATP; it reads EISS. Serine 395 contributes to the L-serine binding site.

This sequence belongs to the class-II aminoacyl-tRNA synthetase family. Type-1 seryl-tRNA synthetase subfamily. In terms of assembly, homodimer. The tRNA molecule binds across the dimer.

Its subcellular location is the cytoplasm. It carries out the reaction tRNA(Ser) + L-serine + ATP = L-seryl-tRNA(Ser) + AMP + diphosphate + H(+). It catalyses the reaction tRNA(Sec) + L-serine + ATP = L-seryl-tRNA(Sec) + AMP + diphosphate + H(+). It participates in aminoacyl-tRNA biosynthesis; selenocysteinyl-tRNA(Sec) biosynthesis; L-seryl-tRNA(Sec) from L-serine and tRNA(Sec): step 1/1. In terms of biological role, catalyzes the attachment of serine to tRNA(Ser). Is also able to aminoacylate tRNA(Sec) with serine, to form the misacylated tRNA L-seryl-tRNA(Sec), which will be further converted into selenocysteinyl-tRNA(Sec). This is Serine--tRNA ligase from Glaesserella parasuis serovar 5 (strain SH0165) (Haemophilus parasuis).